The chain runs to 249 residues: tRNA (guanine-N(1)-)-methyltransferase (249 aa).

Residues Gly117 and 137–142 contribute to the S-adenosyl-L-methionine site; that span reads LGDFVL.

It belongs to the RNA methyltransferase TrmD family. In terms of assembly, homodimer.

It is found in the cytoplasm. The catalysed reaction is guanosine(37) in tRNA + S-adenosyl-L-methionine = N(1)-methylguanosine(37) in tRNA + S-adenosyl-L-homocysteine + H(+). Its function is as follows. Specifically methylates guanosine-37 in various tRNAs. This is tRNA (guanine-N(1)-)-methyltransferase from Janthinobacterium sp. (strain Marseille) (Minibacterium massiliensis).